We begin with the raw amino-acid sequence, 100 residues long: Large ribosomal subunit protein uL23 (100 aa).

The protein belongs to the universal ribosomal protein uL23 family. As to quaternary structure, part of the 50S ribosomal subunit. Contacts protein L29, and trigger factor when it is bound to the ribosome.

One of the early assembly proteins it binds 23S rRNA. One of the proteins that surrounds the polypeptide exit tunnel on the outside of the ribosome. Forms the main docking site for trigger factor binding to the ribosome. In Prochlorococcus marinus (strain MIT 9301), this protein is Large ribosomal subunit protein uL23.